Reading from the N-terminus, the 188-residue chain is ATP synthase subunit delta (188 aa).

It belongs to the ATPase delta chain family. F-type ATPases have 2 components, F(1) - the catalytic core - and F(0) - the membrane proton channel. F(1) has five subunits: alpha(3), beta(3), gamma(1), delta(1), epsilon(1). F(0) has three main subunits: a(1), b(2) and c(10-14). The alpha and beta chains form an alternating ring which encloses part of the gamma chain. F(1) is attached to F(0) by a central stalk formed by the gamma and epsilon chains, while a peripheral stalk is formed by the delta and b chains.

Its subcellular location is the cell inner membrane. Functionally, f(1)F(0) ATP synthase produces ATP from ADP in the presence of a proton or sodium gradient. F-type ATPases consist of two structural domains, F(1) containing the extramembraneous catalytic core and F(0) containing the membrane proton channel, linked together by a central stalk and a peripheral stalk. During catalysis, ATP synthesis in the catalytic domain of F(1) is coupled via a rotary mechanism of the central stalk subunits to proton translocation. In terms of biological role, this protein is part of the stalk that links CF(0) to CF(1). It either transmits conformational changes from CF(0) to CF(1) or is implicated in proton conduction. This is ATP synthase subunit delta from Rhizobium rhizogenes (strain K84 / ATCC BAA-868) (Agrobacterium radiobacter).